A 391-amino-acid chain; its full sequence is S-adenosylmethionine synthase (391 aa).

His-14 is an ATP binding site. Asp-16 contributes to the Mg(2+) binding site. Glu-42 is a K(+) binding site. Residues Glu-55 and Gln-98 each contribute to the L-methionine site. Positions 98-108 (QSADIAMGVDE) are flexible loop. ATP is bound by residues 172-174 (DGK), 238-239 (RF), Asp-247, 253-254 (RK), Ala-270, and Lys-274. L-methionine is bound at residue Asp-247. Residue Lys-278 participates in L-methionine binding.

The protein belongs to the AdoMet synthase family. Homotetramer; dimer of dimers. It depends on Mg(2+) as a cofactor. K(+) serves as cofactor.

The protein localises to the cytoplasm. It catalyses the reaction L-methionine + ATP + H2O = S-adenosyl-L-methionine + phosphate + diphosphate. The protein operates within amino-acid biosynthesis; S-adenosyl-L-methionine biosynthesis; S-adenosyl-L-methionine from L-methionine: step 1/1. Catalyzes the formation of S-adenosylmethionine (AdoMet) from methionine and ATP. The overall synthetic reaction is composed of two sequential steps, AdoMet formation and the subsequent tripolyphosphate hydrolysis which occurs prior to release of AdoMet from the enzyme. The polypeptide is S-adenosylmethionine synthase (Clostridium acetobutylicum (strain ATCC 824 / DSM 792 / JCM 1419 / IAM 19013 / LMG 5710 / NBRC 13948 / NRRL B-527 / VKM B-1787 / 2291 / W)).